The chain runs to 368 residues: Cytochrome b-c1 complex subunit 2, mitochondrial (368 aa).

A mitochondrion-targeting transit peptide spans 1 to 16 (MLSAARLQFAQGSVRR). 2 positions are modified to phosphoserine: serine 141 and serine 168.

It belongs to the peptidase M16 family. UQCRC2/QCR2 subfamily. As to quaternary structure, component of the ubiquinol-cytochrome c oxidoreductase (cytochrome b-c1 complex, complex III, CIII), a multisubunit enzyme composed of 10 subunits. The complex is composed of 3 respiratory subunits cytochrome b (COB), cytochrome c1 (CYT1) and Rieske protein (RIP1), 2 core protein subunits COR1 and QCR2, and 5 low-molecular weight protein subunits QCR6, QCR7, QCR8, QCR9 and QCR10. The complex exists as an obligatory dimer and forms supercomplexes (SCs) in the inner mitochondrial membrane with a monomer or a dimer of cytochrome c oxidase (complex IV, CIV), resulting in 2 different assemblies (supercomplexes III(2)IV and III(2)IV(2)).

It localises to the mitochondrion inner membrane. Its function is as follows. Component of the ubiquinol-cytochrome c oxidoreductase, a multisubunit transmembrane complex that is part of the mitochondrial electron transport chain which drives oxidative phosphorylation. The respiratory chain contains 3 multisubunit complexes succinate dehydrogenase (complex II, CII), ubiquinol-cytochrome c oxidoreductase (cytochrome b-c1 complex, complex III, CIII) and cytochrome c oxidase (complex IV, CIV), that cooperate to transfer electrons derived from NADH and succinate to molecular oxygen, creating an electrochemical gradient over the inner membrane that drives transmembrane transport and the ATP synthase. The cytochrome b-c1 complex catalyzes electron transfer from ubiquinol to cytochrome c, linking this redox reaction to translocation of protons across the mitochondrial inner membrane, with protons being carried across the membrane as hydrogens on the quinol. In the process called Q cycle, 2 protons are consumed from the matrix, 4 protons are released into the intermembrane space and 2 electrons are passed to cytochrome c. This chain is Cytochrome b-c1 complex subunit 2, mitochondrial (QCR2), found in Saccharomyces cerevisiae (strain ATCC 204508 / S288c) (Baker's yeast).